The chain runs to 103 residues: Large ribosomal subunit protein bL21 (103 aa).

It belongs to the bacterial ribosomal protein bL21 family. In terms of assembly, part of the 50S ribosomal subunit. Contacts protein L20.

Its function is as follows. This protein binds to 23S rRNA in the presence of protein L20. The protein is Large ribosomal subunit protein bL21 of Paraburkholderia phytofirmans (strain DSM 17436 / LMG 22146 / PsJN) (Burkholderia phytofirmans).